Here is a 98-residue protein sequence, read N- to C-terminus: Cell division protein FtsB (98 aa).

The Cytoplasmic portion of the chain corresponds to 1–3 (MKR). Residues 4-21 (LLFVLIALLAMLQYRLWL) form a helical membrane-spanning segment. Topologically, residues 22-98 (GDKSLADSFH…GGERGGVPEN (77 aa)) are periplasmic. Positions 31–74 (HLQEQIKLQQQSNAQLVARNQVLREEISDLRSGTEALEERARNE) form a coiled coil.

It belongs to the FtsB family. In terms of assembly, part of a complex composed of FtsB, FtsL and FtsQ.

It is found in the cell inner membrane. Essential cell division protein. May link together the upstream cell division proteins, which are predominantly cytoplasmic, with the downstream cell division proteins, which are predominantly periplasmic. In Shewanella pealeana (strain ATCC 700345 / ANG-SQ1), this protein is Cell division protein FtsB.